The chain runs to 706 residues: Melanopsin (706 aa).

Over M1 to Y86 the chain is Extracellular. N-linked (GlcNAc...) asparagine glycosylation is found at N12, N64, and N69. The chain crosses the membrane as a helical span at residues I87–V107. The Cytoplasmic portion of the chain corresponds to Y108–N121. Residues F122–F142 traverse the membrane as a helical segment. Topologically, residues A143 to E159 are extracellular. C158 and C236 are disulfide-bonded. A helical transmembrane segment spans residues L160–S180. The Cytoplasmic portion of the chain corresponds to M181 to R201. A helical transmembrane segment spans residues V202–F222. At G223–H248 the chain is on the extracellular side. The helical transmembrane segment at I249–C269 threads the bilayer. The Cytoplasmic portion of the chain corresponds to Y270–K314. A helical membrane pass occupies residues I315–A335. The Extracellular segment spans residues L336 to S351. The helical transmembrane segment at I352 to Y372 threads the bilayer. Position 358 is an N6-(retinylidene)lysine (K358). Topologically, residues P373–L706 are cytoplasmic. Disordered stretches follow at residues S393 to T446, R571 to T599, and Q630 to E658. Low complexity-rich tracts occupy residues Q404 to A418 and S426 to S442. Basic and acidic residues predominate over residues R571–R593. Acidic residues predominate over residues G645–E658.

This sequence belongs to the G-protein coupled receptor 1 family. Opsin subfamily. Expressed in Joseph cells and photoreceptor cells of the dorsal ocelli.

The protein localises to the cell membrane. Functionally, photoreceptor implicated in non-image-forming responses to light. Photoisomerizes covalently bound all-trans retinal back to 11-cis retinal. Most likely coupled to the G(q) signaling cascade. The protein is Melanopsin of Branchiostoma belcheri (Amphioxus).